We begin with the raw amino-acid sequence, 442 residues long: Shufflon protein B (442 aa).

The constant region stretch occupies residues 1–361 (MKKYDRGWAS…TGAILSCQSG (361 aa)). A variable region region spans residues 362 to 442 (TWKSSSASIW…SYFMKITCLK (81 aa)).

The chain is Shufflon protein B from Escherichia coli.